Consider the following 174-residue polypeptide: Shikimate kinase (174 aa).

10-15 (GSGKTA) contacts ATP. Thr-14 contributes to the Mg(2+) binding site. Residues Asp-32, Arg-56, and Gly-78 each coordinate substrate. Arg-118 lines the ATP pocket. Arg-137 is a substrate binding site. Arg-154 contributes to the ATP binding site.

This sequence belongs to the shikimate kinase family. Monomer. It depends on Mg(2+) as a cofactor.

Its subcellular location is the cytoplasm. The enzyme catalyses shikimate + ATP = 3-phosphoshikimate + ADP + H(+). The protein operates within metabolic intermediate biosynthesis; chorismate biosynthesis; chorismate from D-erythrose 4-phosphate and phosphoenolpyruvate: step 5/7. Functionally, catalyzes the specific phosphorylation of the 3-hydroxyl group of shikimic acid using ATP as a cosubstrate. In Symbiobacterium thermophilum (strain DSM 24528 / JCM 14929 / IAM 14863 / T), this protein is Shikimate kinase.